The sequence spans 221 residues: D-glycero-alpha-D-manno-heptose 1-phosphate guanylyltransferase (221 aa).

The protein belongs to the D-alpha-D-heptose-1-P guanylyltransferase family.

The enzyme catalyses D-glycero-alpha-D-manno-heptose 1-phosphate + GTP + H(+) = GDP-D-glycero-alpha-D-manno-heptose + diphosphate. Its pathway is nucleotide-sugar biosynthesis; GDP-D-glycero-alpha-D-manno-heptose biosynthesis; GDP-D-glycero-alpha-D-manno-heptose from D-glycero-alpha-D-manno-heptose 7-phosphate: step 3/3. It functions in the pathway capsule biogenesis; capsule polysaccharide biosynthesis. Catalyzes the GDP transfer from GTP to D-glycero-alpha-D-manno-heptose 1-phosphate, yielding GDP-D-alpha-D-heptose. Is able to use ATP, CTP or UTP as substrate in the presence of pyrophosphatase, but at a significantly slower rate. Can also form GDP-alpha-D-mannose from alpha-D-mannose 1-phosphate and GTP. In Campylobacter jejuni subsp. jejuni serotype O:2 (strain ATCC 700819 / NCTC 11168), this protein is D-glycero-alpha-D-manno-heptose 1-phosphate guanylyltransferase.